Here is a 466-residue protein sequence, read N- to C-terminus: Adenosylhomocysteinase (466 aa).

Substrate is bound by residues Thr57, Asp132, and Glu192. Residue Thr193–Thr195 participates in NAD(+) binding. 2 residues coordinate substrate: Lys222 and Asp226. Residues Asn227, Gly256–Gly261, Glu279, Asn314, Ile335–His337, and Asn380 contribute to the NAD(+) site.

Belongs to the adenosylhomocysteinase family. It depends on NAD(+) as a cofactor.

It is found in the cytoplasm. The enzyme catalyses S-adenosyl-L-homocysteine + H2O = L-homocysteine + adenosine. It functions in the pathway amino-acid biosynthesis; L-homocysteine biosynthesis; L-homocysteine from S-adenosyl-L-homocysteine: step 1/1. Functionally, may play a key role in the regulation of the intracellular concentration of adenosylhomocysteine. This Brucella abortus (strain S19) protein is Adenosylhomocysteinase.